The chain runs to 554 residues: Developmental and secondary metabolism regulator ve-1 (554 aa).

The Velvet domain occupies 31–230 (GRKLWYSLRV…AEQGCRVRIR (200 aa)). The Nuclear localization signal signature appears at 45-50 (LRARAC). The segment covering 166 to 175 (TKEDKDKDPE) has biased composition (basic and acidic residues). 3 disordered regions span residues 166-190 (TKED…SFDF), 232-430 (DVRM…PHRL), and 465-528 (PRAY…VDDK). A compositionally biased stretch (polar residues) spans 276-292 (RSMSGSTERTPYSSISD). Pro residues-rich tracts occupy residues 363–372 (SYPPPPPPHQ) and 485–494 (LPPPPPPPPQ). The PEST stretch occupies residues 455–487 (SPSNMAAPPYPRAYSVSNSGGLTSAGGYNQLPP). Over residues 500 to 528 (RAHDQTFRADPEMRRYQDGARERESVDDK) the composition is skewed to basic and acidic residues.

It belongs to the velvet family. VeA subfamily. Component of the heterotrimeric velvet complex composed of lae-1, ve-1 and vel-2; Ve-1 acting as a bridging protein between lae-1 and vel-2.

The protein localises to the nucleus. It localises to the cytoplasm. In terms of biological role, component of the velvet transcription factor complex that controls sexual/asexual developmental ratio in response to light, promoting sexual development in the darkness while stimulating asexual sporulation under illumination. The velvet complex hat acts as a global regulator for secondary metabolite gene expression. The protein is Developmental and secondary metabolism regulator ve-1 of Neurospora crassa (strain ATCC 24698 / 74-OR23-1A / CBS 708.71 / DSM 1257 / FGSC 987).